The following is a 159-amino-acid chain: UPF0201 protein MK0399 (159 aa).

The protein belongs to the UPF0201 family.

This is UPF0201 protein MK0399 from Methanopyrus kandleri (strain AV19 / DSM 6324 / JCM 9639 / NBRC 100938).